Reading from the N-terminus, the 370-residue chain is 3-dehydroquinate synthase (370 aa).

NAD(+) contacts are provided by residues Gly-108–Asp-112, Thr-132–Thr-133, Lys-145, and Lys-154. Zn(2+) is bound by residues Glu-187, His-249, and His-267.

Belongs to the sugar phosphate cyclases superfamily. Dehydroquinate synthase family. Requires Co(2+) as cofactor. Zn(2+) is required as a cofactor. The cofactor is NAD(+).

The protein resides in the cytoplasm. It catalyses the reaction 7-phospho-2-dehydro-3-deoxy-D-arabino-heptonate = 3-dehydroquinate + phosphate. Its pathway is metabolic intermediate biosynthesis; chorismate biosynthesis; chorismate from D-erythrose 4-phosphate and phosphoenolpyruvate: step 2/7. Catalyzes the conversion of 3-deoxy-D-arabino-heptulosonate 7-phosphate (DAHP) to dehydroquinate (DHQ). The polypeptide is 3-dehydroquinate synthase (Cereibacter sphaeroides (strain ATCC 17025 / ATH 2.4.3) (Rhodobacter sphaeroides)).